The following is a 265-amino-acid chain: Triosephosphate isomerase (265 aa).

13 to 15 contacts substrate; the sequence is NWK. The Electrophile role is filled by histidine 106. The Proton acceptor role is filled by glutamate 179. Residues glycine 185, serine 223, and 244–245 each bind substrate; that span reads GG.

Belongs to the triosephosphate isomerase family. Homodimer.

The protein localises to the cytoplasm. It catalyses the reaction D-glyceraldehyde 3-phosphate = dihydroxyacetone phosphate. It functions in the pathway carbohydrate biosynthesis; gluconeogenesis. Its pathway is carbohydrate degradation; glycolysis; D-glyceraldehyde 3-phosphate from glycerone phosphate: step 1/1. Functionally, involved in the gluconeogenesis. Catalyzes stereospecifically the conversion of dihydroxyacetone phosphate (DHAP) to D-glyceraldehyde-3-phosphate (G3P). In Acinetobacter baylyi (strain ATCC 33305 / BD413 / ADP1), this protein is Triosephosphate isomerase.